A 399-amino-acid chain; its full sequence is Stearoyl-[acyl-carrier-protein] 9-desaturase, seed specific, chloroplastic (399 aa).

A chloroplast-targeting transit peptide spans 1–34 (MALKFNPLVSQPYKLASSARPPVSTFRSPKFLCL). Fe cation contacts are provided by Glu-141, Glu-179, His-182, Glu-232, Glu-265, and His-268.

Belongs to the fatty acid desaturase type 2 family. Homodimer. Fe(2+) is required as a cofactor. As to expression, developing seeds.

It is found in the plastid. The protein localises to the chloroplast. The catalysed reaction is octadecanoyl-[ACP] + 2 reduced [2Fe-2S]-[ferredoxin] + O2 + 2 H(+) = (9Z)-octadecenoyl-[ACP] + 2 oxidized [2Fe-2S]-[ferredoxin] + 2 H2O. It functions in the pathway lipid metabolism; fatty acid metabolism. In terms of biological role, converts stearoyl-ACP to oleoyl-ACP by introduction of a cis double bond between carbons Delta(9) and Delta(10) of the acyl chain. This chain is Stearoyl-[acyl-carrier-protein] 9-desaturase, seed specific, chloroplastic, found in Brassica napus (Rape).